The sequence spans 432 residues: Enolase (432 aa).

Residue glutamine 167 participates in (2R)-2-phosphoglycerate binding. Glutamate 209 serves as the catalytic Proton donor. Mg(2+) is bound by residues aspartate 246, glutamate 289, and aspartate 316. Lysine 341, arginine 370, serine 371, and lysine 392 together coordinate (2R)-2-phosphoglycerate. Lysine 341 functions as the Proton acceptor in the catalytic mechanism.

The protein belongs to the enolase family. Mg(2+) is required as a cofactor.

The protein localises to the cytoplasm. Its subcellular location is the secreted. The protein resides in the cell surface. It catalyses the reaction (2R)-2-phosphoglycerate = phosphoenolpyruvate + H2O. The protein operates within carbohydrate degradation; glycolysis; pyruvate from D-glyceraldehyde 3-phosphate: step 4/5. Functionally, catalyzes the reversible conversion of 2-phosphoglycerate (2-PG) into phosphoenolpyruvate (PEP). It is essential for the degradation of carbohydrates via glycolysis. The protein is Enolase of Petrotoga mobilis (strain DSM 10674 / SJ95).